The following is a 687-amino-acid chain: Translation initiation factor IF-2 (687 aa).

A tr-type G domain is found at K186 to K355. The interval G195–T202 is G1. G195–T202 provides a ligand contact to GTP. Residues G220–H224 form a G2 region. The G3 stretch occupies residues D241–G244. Residues D241 to H245 and N295 to D298 contribute to the GTP site. The tract at residues N295–D298 is G4. The interval S331–K333 is G5.

This sequence belongs to the TRAFAC class translation factor GTPase superfamily. Classic translation factor GTPase family. IF-2 subfamily.

It localises to the cytoplasm. In terms of biological role, one of the essential components for the initiation of protein synthesis. Protects formylmethionyl-tRNA from spontaneous hydrolysis and promotes its binding to the 30S ribosomal subunits. Also involved in the hydrolysis of GTP during the formation of the 70S ribosomal complex. This is Translation initiation factor IF-2 from Clostridium botulinum (strain Alaska E43 / Type E3).